Reading from the N-terminus, the 131-residue chain is Sec-independent protein translocase protein TatB (131 aa).

A helical membrane pass occupies residues 2–22 (FANIGWWEMLVLVMVGLVVLG). Positions 90 to 131 (DSLFTGDFDRPTPKKPDAAGSAGPDATEQIGAGPIPFDSDAT) are disordered. Residues 96–106 (DFDRPTPKKPD) are compositionally biased toward basic and acidic residues.

This sequence belongs to the TatB family. The Tat system comprises two distinct complexes: a TatABC complex, containing multiple copies of TatA, TatB and TatC subunits, and a separate TatA complex, containing only TatA subunits. Substrates initially bind to the TatABC complex, which probably triggers association of the separate TatA complex to form the active translocon.

Its subcellular location is the cell membrane. Part of the twin-arginine translocation (Tat) system that transports large folded proteins containing a characteristic twin-arginine motif in their signal peptide across membranes. Together with TatC, TatB is part of a receptor directly interacting with Tat signal peptides. TatB may form an oligomeric binding site that transiently accommodates folded Tat precursor proteins before their translocation. This is Sec-independent protein translocase protein TatB from Mycobacterium tuberculosis (strain ATCC 25177 / H37Ra).